The sequence spans 116 residues: Aspartate 1-decarboxylase (116 aa).

S25 acts as the Schiff-base intermediate with substrate; via pyruvic acid in catalysis. S25 is subject to Pyruvic acid (Ser). Residue T57 participates in substrate binding. Y58 serves as the catalytic Proton donor. 73–75 (GAA) lines the substrate pocket.

Belongs to the PanD family. As to quaternary structure, heterooctamer of four alpha and four beta subunits. The cofactor is pyruvate. Is synthesized initially as an inactive proenzyme, which is activated by self-cleavage at a specific serine bond to produce a beta-subunit with a hydroxyl group at its C-terminus and an alpha-subunit with a pyruvoyl group at its N-terminus.

The protein localises to the cytoplasm. The enzyme catalyses L-aspartate + H(+) = beta-alanine + CO2. It functions in the pathway cofactor biosynthesis; (R)-pantothenate biosynthesis; beta-alanine from L-aspartate: step 1/1. Its function is as follows. Catalyzes the pyruvoyl-dependent decarboxylation of aspartate to produce beta-alanine. This chain is Aspartate 1-decarboxylase, found in Leptospira interrogans serogroup Icterohaemorrhagiae serovar Lai (strain 56601).